The primary structure comprises 543 residues: UBP9-binding protein bun62 (543 aa).

Residue Ser43 is modified to Phosphoserine. WD repeat units follow at residues 239-279 (LNSS…QPLH), 320-361 (FSKS…DVFH), 362-401 (SYFAGLTCVTWSPDGKFIAIGGKDDLVSIYSFPLRKLVAR), 404-448 (GHKS…IHRP), and 513-542 (VDDSPLSSVFFDPDCMITCATNGRIRTWQR).

Interacts with ubp9 and bun107.

It is found in the nucleus. It localises to the cytoplasm. Its subcellular location is the cell tip. In terms of biological role, required for the ubp9 recruitment to septa and cell tips but also for its enzymatic activity at these specific locations. The polypeptide is UBP9-binding protein bun62 (bun62) (Schizosaccharomyces pombe (strain 972 / ATCC 24843) (Fission yeast)).